The primary structure comprises 361 residues: Histidinol-phosphate aminotransferase (361 aa).

An N6-(pyridoxal phosphate)lysine modification is found at K218.

This sequence belongs to the class-II pyridoxal-phosphate-dependent aminotransferase family. Histidinol-phosphate aminotransferase subfamily. Homodimer. Pyridoxal 5'-phosphate serves as cofactor.

It catalyses the reaction L-histidinol phosphate + 2-oxoglutarate = 3-(imidazol-4-yl)-2-oxopropyl phosphate + L-glutamate. Its pathway is amino-acid biosynthesis; L-histidine biosynthesis; L-histidine from 5-phospho-alpha-D-ribose 1-diphosphate: step 7/9. The sequence is that of Histidinol-phosphate aminotransferase from Dinoroseobacter shibae (strain DSM 16493 / NCIMB 14021 / DFL 12).